Reading from the N-terminus, the 41-residue chain is Antimicrobial protein PN-AMP1 (41 aa).

Gln-1 is modified (pyrrolidone carboxylic acid). Residues 1 to 41 (QQCGRQASGRLCGNRLCCSQWGYCGSTASYCGAGCQSQCRS) form the Chitin-binding type-1 domain. Intrachain disulfides connect Cys-3–Cys-18, Cys-12–Cys-24, Cys-17–Cys-31, and Cys-35–Cys-39.

Its function is as follows. Chitin-binding protein with a defensive function against numerous chitin containing fungal pathogens. It is also an inhibitor of Gram-positive bacteria such as B.subtilis. The chain is Antimicrobial protein PN-AMP1 from Ipomoea nil (Japanese morning glory).